The sequence spans 919 residues: Kinesin-like protein KIN-6 (919 aa).

The interval 1-59 is disordered; the sequence is MVRLSTKPPNPKVEMNLKEPPITGAGAGAAASPPAPSTLRRNPPRSARPPPTPLPNSKP. A compositionally biased stretch (low complexity) spans 28–45; sequence GAAASPPAPSTLRRNPPR. The segment covering 46–56 has biased composition (pro residues); that stretch reads SARPPPTPLPN. In terms of domain architecture, Kinesin motor spans 72–415; sequence RLKVFLRIRP…LRQASPYMKI (344 aa). An ATP-binding site is contributed by 171–178; sequence GPTGSGKT. 5 disordered regions span residues 591-615, 674-700, 711-730, 737-764, and 886-919; these read EEVSEESTGHGPERSSDYDDKTGTG, SESCSDGGGVTHSSSSLDHPSDQSFTD, SPQFIGASKKSPIEQSEEER, TTEGIQQNVHTRGVKHHSTPSCSQEVNS, and KEEKVKSSRDAMGRSDKLIRLLTDHPPRARGRAQ. The segment covering 597–612 has biased composition (basic and acidic residues); that stretch reads STGHGPERSSDYDDKT. Over residues 685-697 the composition is skewed to low complexity; it reads HSSSSLDHPSDQS. Positions 755–764 are enriched in polar residues; sequence TPSCSQEVNS. Basic and acidic residues predominate over residues 886-912; sequence KEEKVKSSRDAMGRSDKLIRLLTDHPP.

It belongs to the TRAFAC class myosin-kinesin ATPase superfamily. Kinesin family. KIN-6 subfamily.

The protein is Kinesin-like protein KIN-6 of Oryza sativa subsp. japonica (Rice).